A 63-amino-acid polypeptide reads, in one-letter code: uncharacterized protein (63 aa).

Residues 4 to 24 (LNQFILIFLLLIVILFIFFLI) form a helical membrane-spanning segment.

It localises to the membrane. This is an uncharacterized protein from Invertebrate iridescent virus 6 (IIV-6).